We begin with the raw amino-acid sequence, 210 residues long: Homeobox protein Rhox5 (210 aa).

Residues 1–119 (MEAEGSSRKV…GNPGGRQMPL (119 aa)) are disordered. A compositionally biased stretch (basic and acidic residues) spans 17–30 (GVKEDSEEQHDVKA). The segment covering 47–79 (GQPGVGAVGTEGEGEELNGGKGHFGPGAPGPMG) has biased composition (gly residues). Residues 117 to 175 (MPLQGSRFAQHRLRELESILQRTNSFDVPREDLDRLMDACVSRVQNWFKIRRAAARRTR) constitute a DNA-binding region (homeobox; atypical).

The protein localises to the nucleus. Transcription factor required for differentiation of embryonic stem cells (ESCs) into primordial germ cells. The sequence is that of Homeobox protein Rhox5 (Rhox5) from Mus musculus (Mouse).